A 470-amino-acid chain; its full sequence is Uronate isomerase (470 aa).

The protein belongs to the metallo-dependent hydrolases superfamily. Uronate isomerase family.

It catalyses the reaction D-glucuronate = D-fructuronate. The enzyme catalyses aldehydo-D-galacturonate = keto-D-tagaturonate. It participates in carbohydrate metabolism; pentose and glucuronate interconversion. This Vibrio vulnificus (strain YJ016) protein is Uronate isomerase.